The primary structure comprises 79 residues: Acyl carrier protein (79 aa).

The Carrier domain occupies 2-77 (SSIEERVKKI…QAVDYINKHL (76 aa)). Position 37 is an O-(pantetheine 4'-phosphoryl)serine (serine 37).

This sequence belongs to the acyl carrier protein (ACP) family. 4'-phosphopantetheine is transferred from CoA to a specific serine of apo-ACP by AcpS. This modification is essential for activity because fatty acids are bound in thioester linkage to the sulfhydryl of the prosthetic group.

It is found in the cytoplasm. It participates in lipid metabolism; fatty acid biosynthesis. In terms of biological role, carrier of the growing fatty acid chain in fatty acid biosynthesis. The polypeptide is Acyl carrier protein (Alkalilimnicola ehrlichii (strain ATCC BAA-1101 / DSM 17681 / MLHE-1)).